Here is a 78-residue protein sequence, read N- to C-terminus: Acyl carrier protein (78 aa).

One can recognise a Carrier domain in the interval 2 to 77; the sequence is SNFEERVKKI…AAIDYVVSSA (76 aa). O-(pantetheine 4'-phosphoryl)serine is present on S37.

It belongs to the acyl carrier protein (ACP) family. 4'-phosphopantetheine is transferred from CoA to a specific serine of apo-ACP by AcpS. This modification is essential for activity because fatty acids are bound in thioester linkage to the sulfhydryl of the prosthetic group.

The protein localises to the cytoplasm. It participates in lipid metabolism; fatty acid biosynthesis. Carrier of the growing fatty acid chain in fatty acid biosynthesis. Is probably involved in the biosynthesis of docosahexaenoic acid (DHA) which is produced by this bacterium as a fatty acyl component in its membrane lipid. This Moritella marina (Vibrio marinus) protein is Acyl carrier protein.